The chain runs to 95 residues: Integration host factor subunit beta (95 aa).

The interval 56–76 (RAPRTGRNPKTGTSVELDGKY) is disordered.

Belongs to the bacterial histone-like protein family. Heterodimer of an alpha and a beta chain.

This protein is one of the two subunits of integration host factor, a specific DNA-binding protein that functions in genetic recombination as well as in transcriptional and translational control. This is Integration host factor subunit beta from Shewanella woodyi (strain ATCC 51908 / MS32).